Here is a 284-residue protein sequence, read N- to C-terminus: Prestalk D11 protein (284 aa).

A signal peptide spans 1 to 25; that stretch reads MLNKLILLLILSSCLVLSVKSEVNV. An A-1 repeat occupies 25–64; sequence VDCSLVRCAQPICKPHYRLNMTDSCCGRCEPCTDVACTLQ. The B-1 repeat unit spans residues 65 to 82; it reads VKYCQDGEVPTGCCPCTL. The A-2 repeat unit spans residues 88–126; it reads DCSLVKCARPVCKPYYRLNMTDSCCGRCEPCTGVACTLQ. A B-2 repeat occupies 127 to 144; the sequence is IKYCKDGEVPTGCCPCTP. A C-1 repeat occupies 145–159; it reads QPTKKPDCSKVPCPK. The stretch at 161–178 is one B-3 repeat; it reads LKYCQEGELPTGCCPCTP. The stretch at 179 to 193 is one C-2 repeat; it reads QPTKKPDCSRVPCPK. One copy of the B-4 repeat lies at 195–212; that stretch reads LKYCKEGELPTGCCPCTP. A C-3 repeat occupies 213–228; the sequence is QPTKKPDCSDVMCTMD. The stretch at 229-246 is one B-5 repeat; the sequence is IRYCKNGELPTGCCPCTP. The C-4 repeat unit spans residues 247 to 262; sequence QETKVPDCSKAMCTMD. One copy of the B-6 repeat lies at 263-278; it reads IKYCKPGEKPFGCCPC.

The chain is Prestalk D11 protein (ampA) from Dictyostelium discoideum (Social amoeba).